The chain runs to 212 residues: Holliday junction branch migration complex subunit RuvA (212 aa).

A domain I region spans residues 1 to 70 (MISYLKGSPI…EDQQILYGFS (70 aa)). Positions 71-149 (TTAERELFRQ…QWRKMVGVTV (79 aa)) are domain II. A flexible linker region spans residues 150–160 (TSSAAMPSLEI). Positions 160–212 (ILEDIEMTLLALGYTNEEINKAISTLSQDNLMLKNTNTEEWIKEAIAWLSQGT) are domain III.

This sequence belongs to the RuvA family. Homotetramer. Forms an RuvA(8)-RuvB(12)-Holliday junction (HJ) complex. HJ DNA is sandwiched between 2 RuvA tetramers; dsDNA enters through RuvA and exits via RuvB. An RuvB hexamer assembles on each DNA strand where it exits the tetramer. Each RuvB hexamer is contacted by two RuvA subunits (via domain III) on 2 adjacent RuvB subunits; this complex drives branch migration. In the full resolvosome a probable DNA-RuvA(4)-RuvB(12)-RuvC(2) complex forms which resolves the HJ.

It is found in the cytoplasm. The RuvA-RuvB-RuvC complex processes Holliday junction (HJ) DNA during genetic recombination and DNA repair, while the RuvA-RuvB complex plays an important role in the rescue of blocked DNA replication forks via replication fork reversal (RFR). RuvA specifically binds to HJ cruciform DNA, conferring on it an open structure. The RuvB hexamer acts as an ATP-dependent pump, pulling dsDNA into and through the RuvAB complex. HJ branch migration allows RuvC to scan DNA until it finds its consensus sequence, where it cleaves and resolves the cruciform DNA. The protein is Holliday junction branch migration complex subunit RuvA of Crocosphaera subtropica (strain ATCC 51142 / BH68) (Cyanothece sp. (strain ATCC 51142)).